The following is a 529-amino-acid chain: Bifunctional purine biosynthesis protein PurH (529 aa).

An MGS-like domain is found at 1 to 148 (MQQRRPVRRA…KNHKDVAIVV (148 aa)). At K287 the chain carries N6-acetyllysine.

This sequence belongs to the PurH family.

It carries out the reaction (6R)-10-formyltetrahydrofolate + 5-amino-1-(5-phospho-beta-D-ribosyl)imidazole-4-carboxamide = 5-formamido-1-(5-phospho-D-ribosyl)imidazole-4-carboxamide + (6S)-5,6,7,8-tetrahydrofolate. The catalysed reaction is IMP + H2O = 5-formamido-1-(5-phospho-D-ribosyl)imidazole-4-carboxamide. The protein operates within purine metabolism; IMP biosynthesis via de novo pathway; 5-formamido-1-(5-phospho-D-ribosyl)imidazole-4-carboxamide from 5-amino-1-(5-phospho-D-ribosyl)imidazole-4-carboxamide (10-formyl THF route): step 1/1. It functions in the pathway purine metabolism; IMP biosynthesis via de novo pathway; IMP from 5-formamido-1-(5-phospho-D-ribosyl)imidazole-4-carboxamide: step 1/1. The polypeptide is Bifunctional purine biosynthesis protein PurH (Escherichia coli (strain 55989 / EAEC)).